We begin with the raw amino-acid sequence, 200 residues long: Small ribosomal subunit protein uS4 (200 aa).

An S4 RNA-binding domain is found at 92–155 (SRLDAVVYSL…QKLNVIVESV (64 aa)).

This sequence belongs to the universal ribosomal protein uS4 family. In terms of assembly, part of the 30S ribosomal subunit. Contacts protein S5. The interaction surface between S4 and S5 is involved in control of translational fidelity.

One of the primary rRNA binding proteins, it binds directly to 16S rRNA where it nucleates assembly of the body of the 30S subunit. Functionally, with S5 and S12 plays an important role in translational accuracy. The chain is Small ribosomal subunit protein uS4 from Staphylococcus aureus (strain MRSA252).